A 321-amino-acid chain; its full sequence is Lipoyl synthase (321 aa).

Residues Cys-68, Cys-73, Cys-79, Cys-94, Cys-98, Cys-101, and Ser-308 each coordinate [4Fe-4S] cluster. Residues 80–297 (FNHGTATFMI…KAEALAMGFT (218 aa)) form the Radical SAM core domain.

It belongs to the radical SAM superfamily. Lipoyl synthase family. Requires [4Fe-4S] cluster as cofactor.

Its subcellular location is the cytoplasm. It catalyses the reaction [[Fe-S] cluster scaffold protein carrying a second [4Fe-4S](2+) cluster] + N(6)-octanoyl-L-lysyl-[protein] + 2 oxidized [2Fe-2S]-[ferredoxin] + 2 S-adenosyl-L-methionine + 4 H(+) = [[Fe-S] cluster scaffold protein] + N(6)-[(R)-dihydrolipoyl]-L-lysyl-[protein] + 4 Fe(3+) + 2 hydrogen sulfide + 2 5'-deoxyadenosine + 2 L-methionine + 2 reduced [2Fe-2S]-[ferredoxin]. It participates in protein modification; protein lipoylation via endogenous pathway; protein N(6)-(lipoyl)lysine from octanoyl-[acyl-carrier-protein]: step 2/2. In terms of biological role, catalyzes the radical-mediated insertion of two sulfur atoms into the C-6 and C-8 positions of the octanoyl moiety bound to the lipoyl domains of lipoate-dependent enzymes, thereby converting the octanoylated domains into lipoylated derivatives. This Salmonella arizonae (strain ATCC BAA-731 / CDC346-86 / RSK2980) protein is Lipoyl synthase.